Reading from the N-terminus, the 131-residue chain is Large ribosomal subunit protein uL22 (131 aa).

Residues Met-1–Arg-11 are compositionally biased toward basic residues. The tract at residues Met-1–Arg-20 is disordered.

It belongs to the universal ribosomal protein uL22 family. In terms of assembly, part of the 50S ribosomal subunit.

Functionally, this protein binds specifically to 23S rRNA; its binding is stimulated by other ribosomal proteins, e.g. L4, L17, and L20. It is important during the early stages of 50S assembly. It makes multiple contacts with different domains of the 23S rRNA in the assembled 50S subunit and ribosome. Its function is as follows. The globular domain of the protein is located near the polypeptide exit tunnel on the outside of the subunit, while an extended beta-hairpin is found that lines the wall of the exit tunnel in the center of the 70S ribosome. The polypeptide is Large ribosomal subunit protein uL22 (Agathobacter rectalis (strain ATCC 33656 / DSM 3377 / JCM 17463 / KCTC 5835 / VPI 0990) (Eubacterium rectale)).